A 123-amino-acid chain; its full sequence is Large ribosomal subunit protein uL24 (123 aa).

The protein belongs to the universal ribosomal protein uL24 family. In terms of assembly, part of the 50S ribosomal subunit.

Its function is as follows. One of two assembly initiator proteins, it binds directly to the 5'-end of the 23S rRNA, where it nucleates assembly of the 50S subunit. Functionally, located at the polypeptide exit tunnel on the outside of the subunit. The sequence is that of Large ribosomal subunit protein uL24 from Methanocella arvoryzae (strain DSM 22066 / NBRC 105507 / MRE50).